Reading from the N-terminus, the 728-residue chain is Lanosterol synthase (728 aa).

Residues Arg-117–Gly-159 form a PFTB 1 repeat. Asp-450 serves as the catalytic Proton donor. PFTB repeat units lie at residues Ile-561–Gly-602 and Val-611–Gly-657.

It belongs to the terpene cyclase/mutase family.

The protein resides in the lipid droplet. The protein localises to the endoplasmic reticulum membrane. It catalyses the reaction (S)-2,3-epoxysqualene = lanosterol. The protein operates within terpene metabolism; lanosterol biosynthesis; lanosterol from farnesyl diphosphate: step 3/3. Lanosterol synthase; part of the third module of ergosterol biosynthesis pathway that includes the late steps of the pathway. ERG7 catalyzes the cyclization of (S)-2,3 oxidosqualene to lanosterol, a reaction that forms the sterol core. The third module or late pathway involves the ergosterol synthesis itself through consecutive reactions that mainly occur in the endoplasmic reticulum (ER) membrane. Firstly, the squalene synthase ERG9 catalyzes the condensation of 2 farnesyl pyrophosphate moieties to form squalene, which is the precursor of all steroids. Squalene synthase is crucial for balancing the incorporation of farnesyl diphosphate (FPP) into sterol and nonsterol isoprene synthesis. Secondly, the squalene epoxidase ERG1 catalyzes the stereospecific oxidation of squalene to (S)-2,3-epoxysqualene, which is considered to be a rate-limiting enzyme in steroid biosynthesis. Then, the lanosterol synthase ERG7 catalyzes the cyclization of (S)-2,3 oxidosqualene to lanosterol, a reaction that forms the sterol core. In the next steps, lanosterol is transformed to zymosterol through a complex process involving various demethylation, reduction and desaturation reactions. The lanosterol 14-alpha-demethylase ERG11 (also known as CYP51) catalyzes C14-demethylation of lanosterol to produce 4,4'-dimethyl cholesta-8,14,24-triene-3-beta-ol, which is critical for ergosterol biosynthesis. The C-14 reductase ERG24 reduces the C14=C15 double bond of 4,4-dimethyl-cholesta-8,14,24-trienol to produce 4,4-dimethyl-cholesta-8,24-dienol. 4,4-dimethyl-cholesta-8,24-dienol is substrate of the C-4 demethylation complex ERG25-ERG26-ERG27 in which ERG25 catalyzes the three-step monooxygenation required for the demethylation of 4,4-dimethyl and 4alpha-methylsterols, ERG26 catalyzes the oxidative decarboxylation that results in a reduction of the 3-beta-hydroxy group at the C-3 carbon to an oxo group, and ERG27 is responsible for the reduction of the keto group on the C-3. ERG28 has a role as a scaffold to help anchor ERG25, ERG26 and ERG27 to the endoplasmic reticulum and ERG29 regulates the activity of the iron-containing C4-methylsterol oxidase ERG25. Then, the sterol 24-C-methyltransferase ERG6 catalyzes the methyl transfer from S-adenosyl-methionine to the C-24 of zymosterol to form fecosterol. The C-8 sterol isomerase ERG2 catalyzes the reaction which results in unsaturation at C-7 in the B ring of sterols and thus converts fecosterol to episterol. The sterol-C5-desaturase ERG3 then catalyzes the introduction of a C-5 double bond in the B ring to produce 5-dehydroepisterol. The C-22 sterol desaturase ERG5 further converts 5-dehydroepisterol into ergosta-5,7,22,24(28)-tetraen-3beta-ol by forming the C-22(23) double bond in the sterol side chain. Finally, ergosta-5,7,22,24(28)-tetraen-3beta-ol is substrate of the C-24(28) sterol reductase ERG4 to produce ergosterol. This Candida albicans (strain SC5314 / ATCC MYA-2876) (Yeast) protein is Lanosterol synthase.